Here is a 505-residue protein sequence, read N- to C-terminus: Succinyl-CoA:acetate CoA-transferase (505 aa).

A CoA-binding site is contributed by 269-273 (GVGNV). Glu294 acts as the 5-glutamyl coenzyme A thioester intermediate in catalysis. Positions 364, 384, 388, and 408 each coordinate CoA.

The protein belongs to the acetyl-CoA hydrolase/transferase family. In terms of assembly, homodimer.

It catalyses the reaction succinyl-CoA + acetate = succinate + acetyl-CoA. It functions in the pathway metabolic intermediate biosynthesis; acetyl-CoA biosynthesis. Subject to competitive inhibition by coenzyme A (CoA). Functionally, utilizes succinyl-CoA to convert toxic acetate to acetyl-CoA and succinate. Required for growth on acetic acid and for resistance to high levels of acetic acid. Also has low activity with acetoacetate as substrate. The polypeptide is Succinyl-CoA:acetate CoA-transferase (Acetobacter aceti).